The following is a 486-amino-acid chain: tRNA sulfurtransferase (486 aa).

One can recognise a THUMP domain in the interval 61–165; the sequence is AILIDVLGRI…NDHMMLIKAR (105 aa). ATP-binding positions include 183–184, Lys265, Gly287, and Gln296; that span reads LI. Cys344 and Cys456 are disulfide-bonded. The Rhodanese domain occupies 404–481; the sequence is LSANDVILDI…NGFANVRVFA (78 aa). The Cysteine persulfide intermediate role is filled by Cys456.

It belongs to the ThiI family.

It localises to the cytoplasm. The catalysed reaction is [ThiI sulfur-carrier protein]-S-sulfanyl-L-cysteine + a uridine in tRNA + 2 reduced [2Fe-2S]-[ferredoxin] + ATP + H(+) = [ThiI sulfur-carrier protein]-L-cysteine + a 4-thiouridine in tRNA + 2 oxidized [2Fe-2S]-[ferredoxin] + AMP + diphosphate. It catalyses the reaction [ThiS sulfur-carrier protein]-C-terminal Gly-Gly-AMP + S-sulfanyl-L-cysteinyl-[cysteine desulfurase] + AH2 = [ThiS sulfur-carrier protein]-C-terminal-Gly-aminoethanethioate + L-cysteinyl-[cysteine desulfurase] + A + AMP + 2 H(+). Its pathway is cofactor biosynthesis; thiamine diphosphate biosynthesis. Functionally, catalyzes the ATP-dependent transfer of a sulfur to tRNA to produce 4-thiouridine in position 8 of tRNAs, which functions as a near-UV photosensor. Also catalyzes the transfer of sulfur to the sulfur carrier protein ThiS, forming ThiS-thiocarboxylate. This is a step in the synthesis of thiazole, in the thiamine biosynthesis pathway. The sulfur is donated as persulfide by IscS. This Mannheimia succiniciproducens (strain KCTC 0769BP / MBEL55E) protein is tRNA sulfurtransferase.